Reading from the N-terminus, the 967-residue chain is Probable helicase DDB_G0274399 (967 aa).

Positions 161–192 (EMTDDEDTAPTSAATHVGAPTKSTTTTTTTTT) are disordered. 357–364 (GPPGTGKT) lines the ATP pocket. Disordered regions lie at residues 529-553 (SAIPSSSASTAAATSGSSRSTQDTS) and 892-967 (QKQK…RTRR). Residues 890-949 (NLQKQKDIEKRKKQHKRQKQKSKENDKKKQLKKRKELNNNDNNNNNKESSNKEVQEITNA) adopt a coiled-coil conformation. Residues 900–909 (RKKQHKRQKQ) show a composition bias toward basic residues. The segment covering 928-937 (NNDNNNNNKE) has biased composition (low complexity).

The protein belongs to the DNA2/NAM7 helicase family.

Its subcellular location is the nucleus. This Dictyostelium discoideum (Social amoeba) protein is Probable helicase DDB_G0274399.